Here is a 425-residue protein sequence, read N- to C-terminus: Homogentisate 1,2-dioxygenase (425 aa).

The active-site Proton acceptor is the histidine 283. Fe cation contacts are provided by histidine 326 and glutamate 332. Homogentisate contacts are provided by tyrosine 341 and histidine 362. Position 362 (histidine 362) interacts with Fe cation.

The protein belongs to the homogentisate dioxygenase family. As to quaternary structure, hexamer; dimer of trimers. Requires Fe cation as cofactor.

The enzyme catalyses homogentisate + O2 = 4-maleylacetoacetate + H(+). It functions in the pathway amino-acid degradation; L-phenylalanine degradation; acetoacetate and fumarate from L-phenylalanine: step 4/6. Involved in the catabolism of homogentisate (2,5-dihydroxyphenylacetate or 2,5-OH-PhAc), a central intermediate in the degradation of phenylalanine and tyrosine. Catalyzes the oxidative ring cleavage of the aromatic ring of homogentisate to yield maleylacetoacetate. The protein is Homogentisate 1,2-dioxygenase of Caulobacter vibrioides (strain ATCC 19089 / CIP 103742 / CB 15) (Caulobacter crescentus).